The primary structure comprises 274 residues: Diaminopimelate epimerase (274 aa).

Substrate is bound by residues Asn11, Gln44, and Asn64. Cys73 functions as the Proton donor in the catalytic mechanism. Substrate contacts are provided by residues 74 to 75 (GN), Asn157, Asn190, and 208 to 209 (ER). Cys217 serves as the catalytic Proton acceptor. 218 to 219 (GS) is a substrate binding site.

The protein belongs to the diaminopimelate epimerase family. Homodimer.

Its subcellular location is the cytoplasm. It carries out the reaction (2S,6S)-2,6-diaminopimelate = meso-2,6-diaminopimelate. It participates in amino-acid biosynthesis; L-lysine biosynthesis via DAP pathway; DL-2,6-diaminopimelate from LL-2,6-diaminopimelate: step 1/1. Catalyzes the stereoinversion of LL-2,6-diaminopimelate (L,L-DAP) to meso-diaminopimelate (meso-DAP), a precursor of L-lysine and an essential component of the bacterial peptidoglycan. This chain is Diaminopimelate epimerase, found in Histophilus somni (strain 129Pt) (Haemophilus somnus).